Consider the following 209-residue polypeptide: Guanylate kinase (209 aa).

The 179-residue stretch at 7–185 (GNLYIVAAPS…AAMELQSIVI (179 aa)) folds into the Guanylate kinase-like domain. 14–21 (APSGGGKT) is an ATP binding site.

Belongs to the guanylate kinase family.

Its subcellular location is the cytoplasm. The catalysed reaction is GMP + ATP = GDP + ADP. Functionally, essential for recycling GMP and indirectly, cGMP. In Legionella pneumophila (strain Paris), this protein is Guanylate kinase.